The following is a 112-amino-acid chain: MKKIEAIIRPFKLDEVKIALVNAGIVGMTVSEVRGFGRQKGQTERYRGSEYTVEFLQKLKLEIVVEDAQVDTVIDKIVAAARTGEIGDGKIFVSPVDQTIRIRTGEKNADAI.

At Ser49 the chain carries Phosphoserine. Tyr51 bears the O-UMP-tyrosine mark.

The protein belongs to the P(II) protein family. In terms of assembly, homotrimer. Phosphorylation dependent on the nitrogen source and spectral light quality.

In terms of biological role, P-II indirectly controls the transcription of the GS gene (glnA). P-II prevents NR-II-catalyzed conversion of NR-I to NR-I-phosphate, the transcriptional activator of glnA. When P-II is phosphorylated, these events are reversed. In nitrogen-limiting conditions, when the ratio of Gln to 2-ketoglutarate decreases, P-II is phosphorylated which allows the deadenylation of glutamine synthetase (GS), thus activating the enzyme. This is Nitrogen regulatory protein P-II (glnB) from Synechococcus elongatus (strain ATCC 33912 / PCC 7942 / FACHB-805) (Anacystis nidulans R2).